The chain runs to 754 residues: tRNA 5-methylaminomethyl-2-thiouridine biosynthesis bifunctional protein MnmC (754 aa).

A tRNA (mnm(5)s(2)U34)-methyltransferase region spans residues 1 to 320; sequence MPSCYEHSAQ…RRQAVNNSDS (320 aa). Positions 324–754 are FAD-dependent cmnm(5)s(2)U34 oxidoreductase; it reads IGGGIAGACL…RKLLKGKALC (431 aa).

In the N-terminal section; belongs to the methyltransferase superfamily. tRNA (mnm(5)s(2)U34)-methyltransferase family. It in the C-terminal section; belongs to the DAO family. Requires FAD as cofactor.

It is found in the cytoplasm. The catalysed reaction is 5-aminomethyl-2-thiouridine(34) in tRNA + S-adenosyl-L-methionine = 5-methylaminomethyl-2-thiouridine(34) in tRNA + S-adenosyl-L-homocysteine + H(+). Catalyzes the last two steps in the biosynthesis of 5-methylaminomethyl-2-thiouridine (mnm(5)s(2)U) at the wobble position (U34) in tRNA. Catalyzes the FAD-dependent demodification of cmnm(5)s(2)U34 to nm(5)s(2)U34, followed by the transfer of a methyl group from S-adenosyl-L-methionine to nm(5)s(2)U34, to form mnm(5)s(2)U34. The sequence is that of tRNA 5-methylaminomethyl-2-thiouridine biosynthesis bifunctional protein MnmC from Shewanella denitrificans (strain OS217 / ATCC BAA-1090 / DSM 15013).